The sequence spans 358 residues: Src kinase-associated phosphoprotein 2 (358 aa).

Phosphoserine is present on residues Ser-5 and Ser-9. Residues 14 to 64 (PEEIRNLLADVETFVADTLKGENLSKKAKEKRESLIKKIKDVKSVYLQEFQ) form a homodimerization region. Tyr-75 carries the phosphotyrosine modification. A phosphoserine mark is found at Ser-87 and Ser-90. One can recognise a PH domain in the interval 116 to 219 (FVIKAGYLEK…WVQQLKFILQ (104 aa)). 2 positions are modified to phosphotyrosine: Tyr-151 and Tyr-197. Residue Ser-223 is modified to Phosphoserine. Positions 232–292 (ERGELYDDVD…RDSVHHTSGD (61 aa)) are disordered. Acidic residues predominate over residues 255–270 (IDDEIYEELPEEEEDT). Phosphotyrosine; by FYN is present on Tyr-260. Ser-272, Ser-282, and Ser-285 each carry phosphoserine. The segment covering 274-292 (KMDEQGKGSRDSVHHTSGD) has biased composition (basic and acidic residues). The region spanning 296–357 (DYANFYQGLW…PKAYLMEMYD (62 aa)) is the SH3 domain.

It belongs to the SKAP family. In terms of assembly, interacts with LAT, GRB2, PTK2B and PRAM1. Homodimer. Interacts with FYB1, which is required for SKAP2 protein stability. Interacts with PTPNS1. Part of a complex consisting of SKAP2, FYB1 and PTPNS1. Part of a complex consisting of SKAP2, FYB1 and PIRB. May interact with actin. May interact with FYN, HCK and LYN. Interacts with FASLG. Dephosphorylated on Tyr-75 by PTPN22. Phosphorylated by FYN on Tyr-260. In case of infection with Y.pseudotuberculosis, dephosphorylated by bacterial phosphatase yopH. Expressed in kidney, lung, liver, spleen, bone marrow and testis. Present in T-cells, B-cells, and all cells of the myelomonocytic lineage. Present in all brain regions, with highest levels in neurons from the Purkinje cell layer, hippocampal gyrus, cortex and substantia nigra (at protein level).

The protein resides in the cytoplasm. In terms of biological role, may be involved in B-cell and macrophage adhesion processes. In B-cells, may act by coupling the B-cell receptor (BCR) to integrin activation. May play a role in src signaling pathway. The polypeptide is Src kinase-associated phosphoprotein 2 (Skap2) (Mus musculus (Mouse)).